A 217-amino-acid chain; its full sequence is Ribonuclease HII (217 aa).

Residues 27–216 form the RNase H type-2 domain; the sequence is SRVAGVDEAG…VKESIQEGVC (190 aa). A divalent metal cation is bound by residues D33, E34, and D126.

It belongs to the RNase HII family. Requires Mn(2+) as cofactor. Mg(2+) serves as cofactor.

It localises to the cytoplasm. The catalysed reaction is Endonucleolytic cleavage to 5'-phosphomonoester.. Functionally, endonuclease that specifically degrades the RNA of RNA-DNA hybrids. In Chlamydia trachomatis serovar A (strain ATCC VR-571B / DSM 19440 / HAR-13), this protein is Ribonuclease HII.